Here is an 881-residue protein sequence, read N- to C-terminus: Receptor-like protein 41 (881 aa).

Positions 1-21 are cleaved as a signal peptide; the sequence is MSELLLRLNFLLLLLLSCVSP. Residues 22–844 lie on the Extracellular side of the membrane; the sequence is SSFVTFNNPV…EEQEQVLNWE (823 aa). Asparagine 58, asparagine 70, asparagine 91, asparagine 109, and asparagine 145 each carry an N-linked (GlcNAc...) asparagine glycan. 16 LRR repeats span residues 97–121, 122–145, 146–169, 170–195, 197–219, 220–244, 245–267, 268–291, 293–317, 319–340, 342–364, 365–390, 391–412, 413–437, 439–462, and 463–486; these read FHEL…KFGM, LNKL…SFSN, LSML…VRNL, RKLR…LFEL, HLTY…EFGN, LNKL…ISNL, TQLT…VQNL, TKLS…LFTM, FLSY…SSSS, LESL…ISKL, NLKE…LFSS, FKSL…SYIS, LTLE…ILKS, LPNL…LWSL, RLSS…ILVN, and SSVQ…PLSI. Asparagine 189 is a glycosylation site (N-linked (GlcNAc...) asparagine). N-linked (GlcNAc...) asparagine glycosylation is found at asparagine 243 and asparagine 266. 2 N-linked (GlcNAc...) asparagine glycosylation sites follow: asparagine 305 and asparagine 312. Asparagine 402 carries N-linked (GlcNAc...) asparagine glycosylation. A glycan (N-linked (GlcNAc...) asparagine) is linked at asparagine 462. An LRR 17; degenerate repeat occupies 487–506; it reads IYFSARYNRFKGDIPLSICN. 2 N-linked (GlcNAc...) asparagine glycosylation sites follow: asparagine 506 and asparagine 519. 10 LRR repeats span residues 507-528, 529-552, 554-576, 578-599, 600-624, 627-651, 701-724, 725-748, 749-772, and 774-797; these read RSSL…PPCL, SNLL…YFAD, PLRS…LLNC, ALQF…YLKV, LPKL…NQGS, FPEL…FFVN, TSSA…IGLL, KALI…LANL, VKIE…LGTL, and FLAY…QITG. An N-linked (GlcNAc...) asparagine glycan is attached at asparagine 575. An N-linked (GlcNAc...) asparagine glycan is attached at asparagine 731. Asparagine 779 is a glycosylation site (N-linked (GlcNAc...) asparagine). The helical transmembrane segment at 845-865 threads the bilayer; that stretch reads GVAIGYGVGVLLGLAIAQLIA. The Cytoplasmic portion of the chain corresponds to 866 to 881; that stretch reads SYKPEWLACLIKSRNR.

This sequence belongs to the RLP family.

It is found in the cell membrane. Its function is as follows. May be involved in ABA-induced senescence responses. This chain is Receptor-like protein 41, found in Arabidopsis thaliana (Mouse-ear cress).